Consider the following 544-residue polypeptide: Chaperonin GroEL 4 (544 aa).

ATP contacts are provided by residues 30–33 (TLGP), K51, 87–91 (DGTTT), G415, and D496.

This sequence belongs to the chaperonin (HSP60) family. Forms a cylinder of 14 subunits composed of two heptameric rings stacked back-to-back. Interacts with the co-chaperonin GroES.

Its subcellular location is the cytoplasm. The catalysed reaction is ATP + H2O + a folded polypeptide = ADP + phosphate + an unfolded polypeptide.. In terms of biological role, together with its co-chaperonin GroES, plays an essential role in assisting protein folding. The GroEL-GroES system forms a nano-cage that allows encapsulation of the non-native substrate proteins and provides a physical environment optimized to promote and accelerate protein folding. The polypeptide is Chaperonin GroEL 4 (Sinorhizobium medicae (strain WSM419) (Ensifer medicae)).